A 146-amino-acid polypeptide reads, in one-letter code: MKLHELKPAEGSRKERNRVGRGVATGNGKTSGRGHKGQKARSGGGVRPGFEGGQLPLFRRLPKRGFTNINRKEYAIVNLDQLNKFEDGTEVTPALLVESGVVKNEKSGIKILGNGSLDKKLTVKAHKFSASAAEAIDAKGGAHEVI.

A compositionally biased stretch (basic and acidic residues) spans 1–18 (MKLHELKPAEGSRKERNR). The interval 1-54 (MKLHELKPAEGSRKERNRVGRGVATGNGKTSGRGHKGQKARSGGGVRPGFEGGQ) is disordered. The span at 42–52 (SGGGVRPGFEG) shows a compositional bias: gly residues.

This sequence belongs to the universal ribosomal protein uL15 family. Part of the 50S ribosomal subunit.

Functionally, binds to the 23S rRNA. The polypeptide is Large ribosomal subunit protein uL15 (Staphylococcus aureus (strain Mu3 / ATCC 700698)).